A 207-amino-acid polypeptide reads, in one-letter code: Coiled-coil domain-containing protein 25 (207 aa).

At 1–104 the chain is on the extracellular side; that stretch reads MVFYFTSAVV…SNLKKTADMD (104 aa). Positions 20-24 are DNA-binding; it reads KDKYE. The helical transmembrane segment at 105 to 121 threads the bilayer; it reads IGQIGFHRQKEVKIVAV. Residues 112–189 adopt a coiled-coil conformation; it reads RQKEVKIVAV…EDLKNYTSLM (78 aa). Residues 122–207 lie on the Cytoplasmic side of the membrane; it reads EKKINEIVNR…EDGYDSDDFM (86 aa). Basic and acidic residues predominate over residues 140-183; it reads YPDLAAEKESRDREERNEKKAQIQEQKKKEKEEVKKKKEMEDLK. A disordered region spans residues 140 to 207; it reads YPDLAAEKES…EDGYDSDDFM (68 aa). Polar residues predominate over residues 184-198; sequence NYTSLMKSDNMTTNE. S203 bears the Phosphoserine mark.

It belongs to the CCDC25 family. As to quaternary structure, interacts (via cytoplasmic region) with ILK.

It is found in the cell membrane. Its subcellular location is the endomembrane system. Functionally, transmembrane receptor that senses neutrophil extracellular traps (NETs) and triggers the ILK-PARVB pathway to enhance cell motility. NETs are mainly composed of DNA fibers and are released by neutrophils to bind pathogens during inflammation. Specifically binds NETs on its extracellular region, in particular the 8-OHdG-enriched DNA present in NETs, and recruits ILK, initiating the ILK-PARVB cascade to induce cytoskeleton rearrangement and directional migration of cells. This Danio rerio (Zebrafish) protein is Coiled-coil domain-containing protein 25.